The primary structure comprises 1792 residues: MQESQTKSMFVSRALEKILADKEVKRPQHSQLRRACQVALDEIKAELEKQRLGAAAPPKANFIEADKYFLPFELACQSKSPRVVSTSLDCLQKLIAYGHITGNAPDSGAPGKRLIDRIVETICNCFQGPQTDEGVQLQIIKALLTAVTSPHIEIHEGTILQTVRTCYNIYLASKNLINQTTAKATLTQMLNVIFTRMENQVLQEARELEKPMQSKPQSPVIQATAGSPKFSRLKQSQAQSKPTTPEKAELPNGDHAQSGLGKVSLENGEAPRERGSPVSGRAEPSRGTDSGAQEVVKDILEDVVTSAVKEAAEKHGLPEPDRALGALECQECAVPPGVDENSQTNGIADDRQSLSSADNLEPDVQGHQVAARFSHILQKDAFLVFRSLCKLSMKPLGEGPPDPKSHELRSKVVSLQLLLSVLQNAGPVFRSHEMFVTAIKQYLCVALSKNGVSSVPDVFELSLAIFLTLLSNFKMHLKMQIEVFFKEIFLNILETSTSSFEHRWMVIQTLTRICADAQCVVDIYVNYDCDLNAANIFERLVNDLSKIAQGRSGHELGMTPLQELSLRKKGLECLVSILKCMVEWSKDLYVNPNHQATLGQERLPDQEMGDGKGLDMARRCSVTSVESTVSSGTQTAIQDDPEQFEVIKQQKEIIEHGIELFNKKPKRGIQFLQEQGMLGAAVEDIAQFLHQEERLDSTQVGEFLGDSTRFNKEVMYAYVDQLDFCEKEFVSALRTFLEGFRLPGEAQKIDRLMEKFAARYIECNQGQTLFASADTAYVLAYSIIMLTTDLHSPQVKNKMTKEQYIKMNRGINDSKDLPEEYLSSIYDEIEGKKIAMKETKEHTIATKSTKQSVASEKQRRLLYNVEMEQMAKTAKALMEAVSHAKAPFTSATHLDHVRPMFKLVWTPLLAAYSIGLQNCDDTEVASLCLEGIRCAVRIACIFGMQLERDAYVQALARFSLLTASSSITEMKQKNIDTIKTLITVAHTDGNYLGNSWHEILKCISQLELAQLIGTGVKTRYLSGSGREREGSLKGHSLAGEEFMGLGLGNLVSGGVDKRQMASFQESVGETSSQSVVVAVDRIFTGSTRLDGNAIVDFVRWLCAVSMDELASPHHPRMFSLQKIVEISYYNMNRIRLQWSRIWHVIGDHFNKVGCNPNEDVAIFAVDSLRQLSMKFLEKGELANFRFQKDFLRPFEHIMKKNRSPTIRDMVIRCIAQMVSSQAANIRSGWKNIFAVFHQAASDHDGNIVELAFQTTGHIVSTIFQHHFPAAIDSFQDAVKCLSEFACNAAFPDTSMEAIRLIRFCGKYVSERPRVLQEYTSDDMNVAPGDRVWVRGWFPILFELSCIINRCKLDVRTRGLTVMFEIMKSYGHTFAKHWWQDLFRIVFRIFDNMKLPEQQSEKSEWMTTTCNHALYAICDVFTQFYEALHEVLLSDVFAQLQWCVKQDNEQLARSGTNCLENLVISNGEKFSPAVWDETCNCMLDIFKTTIPHVLLTWRPAGMEEEVSDRHLDVDLDRQSLSSIDRNASERGQSQLSNPTDDSWKGAPYAHQKLLASLLIKCVVQLELIQTIDNIVFYPATSKKEDAEHMVAAQQDTLDAEIHIETENQGMYKFMSSQHLFKLLDCLQESHSFSKAFNSNYEQRTVLWRAGFKGKSKPNLLKQETSSLACCLRILFRMYVDENRRDSWDEIQQRLLRVCSEALAYFITVNSESHREAWTSLLLLLLTKTLKISDEKFKAHASMYYPYLCEIMQFDLIPELRAVLRKFFLRIGLVYKIWIPEEPSQVPAALSSTW.

M1 is modified (N-acetylmethionine). A DCB; DCB:DCB domain and DCB:HUS domain interaction region spans residues Q2–T224. Residues E207 to E294 form a disordered region. Phosphoserine occurs at positions 214, 218, and 227. Residues S214–A225 show a composition bias toward polar residues. Residues L233–T243 show a composition bias toward polar residues. T244 carries the post-translational modification Phosphothreonine. Phosphoserine occurs at positions 355 and 356. The segment at A515–N535 is HUS; DCB:HUS domain interaction. Position 621 is a phosphoserine (S621). At T623 the chain carries Phosphothreonine. Residue S624 is modified to Phosphoserine. The residue at position 633 (T633) is a Phosphothreonine. In terms of domain architecture, SEC7 spans F661–S792. Phosphoserine is present on residues S707, S1518, S1520, S1521, S1532, S1535, S1541, and S1789.

Homodimer. Interacts with ARFGEF1/BIG1; both proteins are probably part of the same or very similar macromolecular complexes. Interacts with PRKAR1A, PRKAR2A, PRKAR1B, PRKAR2B, PPP1CC, PDE3A, TNFRSF1A, MYCBP and EXOC7. Interacts with GABRB1, GABRB2 and GABRB3. In terms of processing, in vitro phosphorylated by PKA reducing its GEF activity and dephosphorylated by phosphatase PP1.

It localises to the cytoplasm. The protein localises to the membrane. The protein resides in the golgi apparatus. It is found in the perinuclear region. Its subcellular location is the trans-Golgi network. It localises to the endosome. The protein localises to the cytoskeleton. The protein resides in the microtubule organizing center. It is found in the centrosome. Its subcellular location is the cell projection. It localises to the dendrite. The protein localises to the cytoplasmic vesicle. The protein resides in the synapse. With respect to regulation, inhibited by brefeldin A. Promotes guanine-nucleotide exchange on ARF1 and ARF3 and to a lower extent on ARF5 and ARF6. Promotes the activation of ARF1/ARF5/ARF6 through replacement of GDP with GTP. Involved in the regulation of Golgi vesicular transport. Required for the integrity of the endosomal compartment. Involved in trafficking from the trans-Golgi network (TGN) to endosomes and is required for membrane association of the AP-1 complex and GGA1. Seems to be involved in recycling of the transferrin receptor from recycling endosomes to the plasma membrane. Probably is involved in the exit of GABA(A) receptors from the endoplasmic reticulum. Involved in constitutive release of tumor necrosis factor receptor 1 via exosome-like vesicles; the function seems to involve PKA and specifically PRKAR2B. Proposed to act as A kinase-anchoring protein (AKAP) and may mediate crosstalk between Arf and PKA pathways. In Mus musculus (Mouse), this protein is Brefeldin A-inhibited guanine nucleotide-exchange protein 2 (Arfgef2).